An 89-amino-acid polypeptide reads, in one-letter code: MVMDIEAKKAVIDAHAKHEGDTGSPEVQVALLTARIEQLTGHFKVHKKDYHSRTGLLKLVGQRRKLLNYLKKKDVQRYRALIEKLGLRK.

Belongs to the universal ribosomal protein uS15 family. Part of the 30S ribosomal subunit. Forms a bridge to the 50S subunit in the 70S ribosome, contacting the 23S rRNA.

In terms of biological role, one of the primary rRNA binding proteins, it binds directly to 16S rRNA where it helps nucleate assembly of the platform of the 30S subunit by binding and bridging several RNA helices of the 16S rRNA. Its function is as follows. Forms an intersubunit bridge (bridge B4) with the 23S rRNA of the 50S subunit in the ribosome. This is Small ribosomal subunit protein uS15 from Nitratidesulfovibrio vulgaris (strain DP4) (Desulfovibrio vulgaris).